Consider the following 311-residue polypeptide: Small ribosomal subunit biogenesis GTPase RsgA (311 aa).

In terms of domain architecture, CP-type G spans 88–246 (SKEKEQVIVA…VIDTPGIREF (159 aa)). GTP contacts are provided by residues 137 to 140 (NKID) and 188 to 196 (GHSGVGKST). Residues Cys270, Cys275, His277, and Cys283 each contribute to the Zn(2+) site.

This sequence belongs to the TRAFAC class YlqF/YawG GTPase family. RsgA subfamily. As to quaternary structure, monomer. Associates with 30S ribosomal subunit, binds 16S rRNA. Zn(2+) serves as cofactor.

It is found in the cytoplasm. One of several proteins that assist in the late maturation steps of the functional core of the 30S ribosomal subunit. Helps release RbfA from mature subunits. May play a role in the assembly of ribosomal proteins into the subunit. Circularly permuted GTPase that catalyzes slow GTP hydrolysis, GTPase activity is stimulated by the 30S ribosomal subunit. In Chlorobaculum tepidum (strain ATCC 49652 / DSM 12025 / NBRC 103806 / TLS) (Chlorobium tepidum), this protein is Small ribosomal subunit biogenesis GTPase RsgA.